We begin with the raw amino-acid sequence, 244 residues long: Probable ABC transporter ATP-binding protein p29 (244 aa).

Residues L6–I241 enclose the ABC transporter domain. Residue G38–T45 participates in ATP binding.

This sequence belongs to the ABC transporter superfamily.

Its function is as follows. Part of a high-affinity transport system. The protein is Probable ABC transporter ATP-binding protein p29 (p29) of Mycoplasma pneumoniae (strain ATCC 29342 / M129 / Subtype 1) (Mycoplasmoides pneumoniae).